Consider the following 1173-residue polypeptide: MSNKTGGKRSATINSDIANHNMVSEVPPERPNIRATRTSRKAIAFGKRAHSMKRNPNAPVTKAGWLYKQASSGVKQWNKRWFVLVDRCLFYYKDEKQESILGSIPLLSFRVAAVQPSDNISRKHTFKAEHAGVRTYFFSAESPEEQEAWIQAMGEAARVQIPPAQKSVPQPVRHSLEKPDSENIPPSKHHQQPPHNNLTKLEPEAKTRGEGDGRGCEKAERRPERPEVKKETLVKANGLPSGPETASEPGSPYPDGPRVPGGGEHPAQPNGWQYSSPSRPGSTAFPPHDGDSGGQRRSFPPRTDPDKIAQRKSSMNQLQQWVNLRRGVPPPEDLRSPSRFYPMPRRVPDYYNPYSSQYPDDYQYYPPGVRPDSICSMPAYDRISPPWALEDKRHSFRNGGGPTYQLHEWKESTSYGRQDGTVWIPSPSRQPVFYDELDAASGSLRRLSLQPRSHSVPRSPSQGSYSRARIYSPVRSPSARFDRLPPRSEDIYADPAAYVMRRSISSPKYDYLGDRRPVPAGLFPYNYPSSPTVHDKMDELLDLQLQRNLEYLDQQMSESETLISMVNRMVENSSPRAHLFMQVPAYPEVFRDGLHTFKLNEQDTDKLLGKLCEQNKVVREQERLVQQLRAEKESLESALMGTHQELEMFGSQPAYPEKLLHKKESLQNQLINIRVELSQATTALTNSTVVYENLESEVSALHDELWEQLNLDIQNEVLNRQIQKEIWRIQDVMEGLRKNNPSRGTDTAKHRGGLGPSATYSSNSPASPLSSASLTSPLSPFSMVSGSQGSPTKPGSSEEPGPPRPPLPKAYVPLESPPTVPPLPNESRFWPYPNSPSWHRSGETAKGQPKTGYETSKKDPSQTSPLGTPRDINLVPTRQEVEAEKQAALNKVGIVPPRTKSPAEEELTPSAVVRRTTNGLTNGLSSRQERPKSAVFSGEGKVKMSVEEQMDRMRRHQSGSMKEKRRSLQLPASPAPEPSTRPAYKVVRRHRSIHEVDISNLEAALRAEEPGGQAYETPREEIARLRKMELEPQHYDVDISKELSTPDKVLIPERYIDLEPDTPLSPEELKEKQKKVERIKTLIAKSSMQNVVPIGEGDSVDVPQDSESQLQEQEKRIEISCALATEASRRGRMLSVQCATPSPPTSPASPTPPVNPLSSDRPRGADSSHTMRV.

Residues Met1–Met22 show a composition bias toward polar residues. The segment at Met1 to Ser39 is disordered. Positions Pro59–Arg158 constitute a PH domain. The interval Pro163 to Arg346 is disordered. Over residues Leu201–Leu233 the composition is skewed to basic and acidic residues. 2 positions are modified to phosphoserine: Ser247 and Ser251. Composition is skewed to polar residues over residues Asn270 to Gly281 and Arg311 to Val322. A phosphoserine mark is found at Ser314, Ser459, Ser461, and Ser472. Residue Tyr492 is modified to Phosphotyrosine. Residue Ser665 is modified to Phosphoserine. Disordered regions lie at residues Arg737–Ile872 and Ala888–Tyr984. Low complexity-rich tracts occupy residues Ser761–Ser782 and Gly789–Glu799. Pro residues predominate over residues Glu815–Pro824. Ser864 bears the Phosphoserine mark. Thr868 is modified (phosphothreonine). Ser901 is modified (phosphoserine). Phosphothreonine is present on Thr908. The segment covering Arg915–Ser926 has biased composition (polar residues). Position 925 is a phosphoserine (Ser925). A compositionally biased stretch (basic and acidic residues) spans Gly940 to Arg952. Residues Met953 to Ser967 show a composition bias toward basic residues. Phosphoserine is present on residues Ser973, Ser979, and Ser992. Thr1045 carries the phosphothreonine modification. Phosphoserine is present on Ser1065. 2 disordered regions span residues Pro1093 to Glu1114 and Arg1130 to Val1173. At Thr1140 the chain carries Phosphothreonine. Positions Pro1141–Asn1155 are enriched in pro residues. Ser1142 is subject to Phosphoserine. Thr1145 carries the phosphothreonine modification. A phosphoserine mark is found at Ser1146 and Ser1149. Position 1151 is a phosphothreonine (Thr1151).

This chain is Pleckstrin homology domain-containing family A member 6 (Plekha6), found in Mus musculus (Mouse).